The chain runs to 359 residues: tRNA/tmRNA (uracil-C(5))-methyltransferase (359 aa).

Positions 183, 211, 216, 232, and 292 each coordinate S-adenosyl-L-methionine. C317 serves as the catalytic Nucleophile. The active-site Proton acceptor is E351.

This sequence belongs to the class I-like SAM-binding methyltransferase superfamily. RNA M5U methyltransferase family. TrmA subfamily.

It catalyses the reaction uridine(54) in tRNA + S-adenosyl-L-methionine = 5-methyluridine(54) in tRNA + S-adenosyl-L-homocysteine + H(+). The enzyme catalyses uridine(341) in tmRNA + S-adenosyl-L-methionine = 5-methyluridine(341) in tmRNA + S-adenosyl-L-homocysteine + H(+). In terms of biological role, dual-specificity methyltransferase that catalyzes the formation of 5-methyluridine at position 54 (m5U54) in all tRNAs, and that of position 341 (m5U341) in tmRNA (transfer-mRNA). This Pseudomonas fluorescens (strain ATCC BAA-477 / NRRL B-23932 / Pf-5) protein is tRNA/tmRNA (uracil-C(5))-methyltransferase.